We begin with the raw amino-acid sequence, 404 residues long: POU domain, class 2, transcription factor 3L (404 aa).

Disordered regions lie at residues 1–29 (MNREPDSTVEQQHGSGHLENDAERDTLDF) and 44–67 (TGIPHRPCHLSQASMMGGGQMTGE). Basic and acidic residues predominate over residues 16 to 29 (GHLENDAERDTLDF). In terms of domain architecture, POU-specific spans 187 to 235 (QGDVGLAMGKLYGNDFSQTTISRFEALNLSFKNMCKLKPLLEKWLNDAE). The segment at residues 259 to 297 (KRKKRTSIETNIRLTLEKRFQDNPKPSSEEISMIAEQLV) is a DNA-binding region (homeobox). Residues 346 to 367 (MTVTSSCSPGNSSRPSSPTCGL) form a disordered region. Residues 350-363 (SSCSPGNSSRPSSP) are compositionally biased toward low complexity.

Belongs to the POU transcription factor family. Class-2 subfamily.

It is found in the nucleus. Transcription factor that binds to the octamer motif (5'-ATTTGCAT-3') and regulates cell type-specific differentiation pathways. In Xenopus laevis (African clawed frog), this protein is POU domain, class 2, transcription factor 3L (pou2f3.L).